A 44-amino-acid chain; its full sequence is Alpha-amylase inhibitor WDAI-3 (44 aa).

Cysteines 20 and 41 form a disulfide.

The protein belongs to the protease inhibitor I6 (cereal trypsin/alpha-amylase inhibitor) family. Homodimer. Post-translationally, the disulfide bonds are essential for the inhibitor activity. Endosperm.

Its subcellular location is the secreted. In terms of biological role, alpha-amylase inhibitor. The sequence is that of Alpha-amylase inhibitor WDAI-3 (IHA-B1-2) from Triticum aestivum (Wheat).